The following is a 211-amino-acid chain: MIRVLLIDDHEMVRMGLAAFLEAQPDIEVIGEASDGSEGVRLAVELSPDVILMDLVMEGMDGIEATKQICRELSDPKIIVLTSFIDDDKVYPVIEAGALSYLLKTSKAAEIADAIRAASKGEPKLESKVAGKVLSRLRHSGENALPHESLTKRELEILCLIAEGKTNKEIGEELFITIKTVKTHITNILSKLDVSDRTQAAVYAHRNHLVN.

Residues 3–119 (RVLLIDDHEM…EIADAIRAAS (117 aa)) form the Response regulatory domain. 4-aspartylphosphate is present on D54. Positions 143-208 (NALPHESLTK…QAAVYAHRNH (66 aa)) constitute an HTH luxR-type domain. The segment at residues 167–186 (NKEIGEELFITIKTVKTHIT) is a DNA-binding region (H-T-H motif).

In terms of processing, phosphorylated by LiaS.

It is found in the cytoplasm. Functionally, member of the two-component regulatory system LiaS/LiaR probably involved in response to a subset of cell wall-active antibiotics that interfere with the lipid II cycle in the cytoplasmic membrane (bacitracin, nisin, ramoplanin and vancomycin). Also seems to be involved in response to cationic antimicrobial peptides and secretion stress. LiaR regulates the transcription of the liaIHGFSR operon. This is Transcriptional regulatory protein LiaR (liaR) from Bacillus subtilis (strain 168).